The chain runs to 869 residues: H(+)/Cl(-) exchange transporter 6 (869 aa).

Over 1–80 (MAGCRGSLCC…KKGRWYEVVK (80 aa)) the chain is Cytoplasmic. 2 consecutive transmembrane segments (helical) span residues 81-113 (WTVVFAIGVCTGLVGLFVDFFVQLFTQLKFGVV) and 128-150 (LSLLELLGFNLTFVFLASLLVLI). Positions 156-160 (GSGIP) match the Selectivity filter part_1 motif. Ser157 contacts chloride. Residues 159-166 (IPEIKCYL) constitute an intramembrane region (helical). The next 2 helical transmembrane spans lie at 176 to 194 (RLRTLLCKVFGVLFSVAGG) and 200 to 217 (EGPMIHSGAVVGAGLPQF). The short motif at 198-202 (GKEGP) is the Selectivity filter part_2 element. 2 intramembrane regions (helical) span residues 241–253 (FVSAGAAAGIAAA) and 257–265 (PIGATLFSL). The next 3 membrane-spanning stretches (helical) occupy residues 277–294 (TWKVLFCSMSATFTLNFF), 335–364 (GFFVVMGVIGGLLGATFNCLNKRLAKYRMR), and 371–392 (KLVRVLESLLVSLVTTLVVFVA). 3 N-linked (GlcNAc...) asparagine glycosylation sites follow: Asn410, Asn422, and Asn432. Helical transmembrane passes span 462-481 (PITLALFFVLYFLLACWTYG) and 487-511 (GLFVPSLLCGAAFGRLVANVLKSYI). The short motif at 487 to 491 (GLFVP) is the Selectivity filter part_3 element. Phe489 is a chloride binding site. Residues 519 to 533 (GTFSLIGAAALLGGV) constitute an intramembrane region (helical). An intramembrane region (note=Loop between two helices) is located at residues 534-536 (VRM). Residues 537 to 548 (TISLTVILIEST) constitute an intramembrane region (helical). The segment at residues 549 to 552 (NEIT) is an intramembrane region (note=Loop between two helices). Residues 553 to 571 (YGLPIMITLMVAKWTGDFF) traverse the membrane as a helical segment. At 572–869 (NKGIYDIHVG…ARLRQHYQTI (298 aa)) the chain is on the cytoplasmic side. Tyr576 is a binding site for chloride. The CBS 1 domain occupies 605 to 662 (MEPNLTYVYPHTRIQSLVSILRTTVHHAFPVVTENRGNEKEFMKGNQLISNNIKFKKS). 630-632 (HHA) is an ATP binding site. Positions 668-687 (AGEQRRRSQSMKSYPSSELR) are disordered. Positions 677-686 (SMKSYPSSEL) are enriched in polar residues. The residue at position 773 (Ser773) is a Phosphoserine. The CBS 2 domain maps to 807-868 (MNPSPFTVSP…QARLRQHYQT (62 aa)). Position 849–852 (849–852 (TRHN)) interacts with ATP.

It belongs to the chloride channel (TC 2.A.49) family. ClC-6/CLCN6 subfamily. Post-translationally, N-glycosylated on several asparagine residues.

Its subcellular location is the late endosome membrane. It carries out the reaction 2 chloride(in) + H(+)(out) = 2 chloride(out) + H(+)(in). In terms of biological role, voltage-gated channel mediating the exchange of chloride ions against protons. Functions as antiporter and contributes to the acidification of the late endosome lumen. The CLC channel family contains both chloride channels and proton-coupled anion transporters that exchange chloride or another anion for protons. The presence of conserved gating glutamate residues is typical for family members that function as antiporters. In Oryctolagus cuniculus (Rabbit), this protein is H(+)/Cl(-) exchange transporter 6 (CLCN6).